Consider the following 241-residue polypeptide: Glutamate/aspartate import ATP-binding protein GltL (241 aa).

Positions 2–236 (ITLKNVSKWY…PKSDRAKDFL (235 aa)) constitute an ABC transporter domain. 34 to 41 (GPSGSGKS) is an ATP binding site.

This sequence belongs to the ABC transporter superfamily. As to quaternary structure, the complex is composed of two ATP-binding proteins (GltL), two transmembrane proteins (GltJ and GltK) and a solute-binding protein (GltI).

The protein resides in the cell inner membrane. The enzyme catalyses a polar amino acid(out) + ATP + H2O = a polar amino acid(in) + ADP + phosphate + H(+). It catalyses the reaction L-glutamate(out) + ATP + H2O = L-glutamate(in) + ADP + phosphate + H(+). The catalysed reaction is L-aspartate(out) + ATP + H2O = L-aspartate(in) + ADP + phosphate + H(+). Its function is as follows. Part of the ABC transporter complex GltIJKL involved in glutamate and aspartate uptake. Probably responsible for energy coupling to the transport system. In Escherichia coli O157:H7, this protein is Glutamate/aspartate import ATP-binding protein GltL (gltL).